Here is a 185-residue protein sequence, read N- to C-terminus: Elongation factor P (185 aa).

The protein belongs to the elongation factor P family.

The protein resides in the cytoplasm. It functions in the pathway protein biosynthesis; polypeptide chain elongation. In terms of biological role, involved in peptide bond synthesis. Stimulates efficient translation and peptide-bond synthesis on native or reconstituted 70S ribosomes in vitro. Probably functions indirectly by altering the affinity of the ribosome for aminoacyl-tRNA, thus increasing their reactivity as acceptors for peptidyl transferase. The sequence is that of Elongation factor P from Syntrophomonas wolfei subsp. wolfei (strain DSM 2245B / Goettingen).